Here is a 320-residue protein sequence, read N- to C-terminus: Olfactory receptor 10J1 (320 aa).

Residues 1-36 are Extracellular-facing; the sequence is MLLCFRFGNQSMKRENFTLITDFVFQGFSSFHEQQI. Residues Asn-9 and Asn-16 are each glycosylated (N-linked (GlcNAc...) asparagine). The chain crosses the membrane as a helical span at residues 37 to 57; the sequence is TLFGVFLALYILTLAGNIIIV. At 58–65 the chain is on the cytoplasmic side; that stretch reads TIIRMDLH. A helical transmembrane segment spans residues 66-86; the sequence is LHTPMYFFLSMLSTSETVYTL. The Extracellular segment spans residues 87-110; the sequence is VILPRMLSSLVGMSQPISLAGCAT. Cys-108 and Cys-199 are disulfide-bonded. A helical transmembrane segment spans residues 111–131; sequence QMFFFVTFGITNCFLLTAMGY. At 132–150 the chain is on the cytoplasmic side; sequence DRYVAICNPLRYMVIMNKR. The helical transmembrane segment at 151–171 threads the bilayer; it reads LRIQLVLGACSIGLIVAITQV. At 172–207 the chain is on the extracellular side; that stretch reads TSVFRLPFCARKVPHFFCDIRPVMKLSCIDTTVNEI. A helical membrane pass occupies residues 208–227; that stretch reads LTLIISVLVLVVPMGLVFIS. The Cytoplasmic portion of the chain corresponds to 228-247; the sequence is YVLIISTILKIASVEGRKKA. Residues 248 to 268 traverse the membrane as a helical segment; it reads FATCASHLTVVIVHYSCASIA. Residues 269–281 are Extracellular-facing; that stretch reads YLKPKSENTREHD. Residues 282 to 302 traverse the membrane as a helical segment; that stretch reads QLISVTYTVITPLLNPVVYTL. The Cytoplasmic portion of the chain corresponds to 303 to 320; it reads RNKEVKDALCRAVGGKFS.

Belongs to the G-protein coupled receptor 1 family.

The protein localises to the cell membrane. Functionally, odorant receptor. The sequence is that of Olfactory receptor 10J1 (OR10J1) from Homo sapiens (Human).